We begin with the raw amino-acid sequence, 177 residues long: Large ribosomal subunit protein uL6 (177 aa).

Belongs to the universal ribosomal protein uL6 family. In terms of assembly, part of the 50S ribosomal subunit.

Its function is as follows. This protein binds to the 23S rRNA, and is important in its secondary structure. It is located near the subunit interface in the base of the L7/L12 stalk, and near the tRNA binding site of the peptidyltransferase center. The sequence is that of Large ribosomal subunit protein uL6 from Edwardsiella ictaluri (strain 93-146).